A 224-amino-acid chain; its full sequence is Phosphoribosyltransferase domain-containing protein 1 (224 aa).

Mg(2+)-binding residues include Glu140 and Asp141. GMP contacts are provided by residues 140–148 (EDIINTGRT), Lys172, 193–194 (FV), and Asp200. Asp200 is a Mg(2+) binding site.

Belongs to the purine/pyrimidine phosphoribosyltransferase family.

The chain is Phosphoribosyltransferase domain-containing protein 1 (prtfdc1) from Xenopus laevis (African clawed frog).